Reading from the N-terminus, the 945-residue chain is Glutamyl aminopeptidase (945 aa).

The Cytoplasmic segment spans residues 1 to 18 (MNFAEEEPSKKYCIKGKH). The chain crosses the membrane as a helical; Signal-anchor for type II membrane protein span at residues 19-39 (VAIICGVVVAVGLIVGLSVGL). The Extracellular segment spans residues 40-945 (TRSCEQDTTP…SIREWFASLP (906 aa)). Residues 43–77 (CEQDTTPAPSQPPPEASTALPPQDQNVCPDSEDES) form a disordered region. Asn116 and Asn189 each carry an N-linked (GlcNAc...) asparagine glycan. Position 215 (Glu215) interacts with substrate. N-linked (GlcNAc...) asparagine glycosylation occurs at Asn316. 349-353 (GAMEN) provides a ligand contact to substrate. His385 contacts Zn(2+). Glu386 acts as the Proton acceptor in catalysis. 2 residues coordinate Zn(2+): His389 and Glu408. N-linked (GlcNAc...) asparagine glycans are attached at residues Asn546, Asn601, Asn637, Asn669, Asn754, and Asn792. Position 878 (Arg878) interacts with substrate.

It belongs to the peptidase M1 family. Homodimer; disulfide-linked. The cofactor is Zn(2+). In terms of tissue distribution, early B-lineage cells and certain stromal cell of hemopoietic tissues. Also expressed by capillary endothelial cells, placenta, and epithelial cells of the intestine and proximal renal tubules.

The protein localises to the cell membrane. It carries out the reaction Release of N-terminal glutamate (and to a lesser extent aspartate) from a peptide.. With respect to regulation, substrate specificity is modulated by calcium which enhances the enzymatic activity for cleavage of acidic residues while reducing its activity with basic residues. Inhibited by aminopeptidase inhibitors amastatin and bestatin. Functionally, regulates central hypertension through its calcium-modulated preference to cleave N-terminal acidic residues from peptides such as angiotensin II. The polypeptide is Glutamyl aminopeptidase (Enpep) (Mus musculus (Mouse)).